The following is a 154-amino-acid chain: Protein X (154 aa).

The mitochondrial targeting sequence stretch occupies residues 68–117 (PCALRFTSARRMETTVNAHRNLPKVLHKRTLGLSAMSTTDLEAYFKDCVF).

The protein belongs to the orthohepadnavirus protein X family. As to quaternary structure, may form homodimer. May interact with host CEBPA, CFLAR, CREB1, DDB1, E4F1, HBXIP, HSPD1/HSP60, NFKBIA, POLR2E and SMAD4. Interacts with host SMC5-SMC6 complex and induces its degradation. Interacts with host TRPC4AP; leading to prevent ubiquitination of TRPC4AP. Interacts with host PLSCR1; this interaction promotes ubiquitination and degradation of HBx and impairs HBx-mediated cell proliferation. Post-translationally, a fraction may be phosphorylated in insect cells and HepG2 cells, a human hepatoblastoma cell line. Phosphorylated in vitro by host protein kinase C or mitogen-activated protein kinase. N-acetylated in insect cells.

It localises to the host cytoplasm. It is found in the host nucleus. The protein resides in the host mitochondrion. Functionally, multifunctional protein that plays a role in silencing host antiviral defenses and promoting viral transcription. Does not seem to be essential for HBV infection. May be directly involved in development of cirrhosis and liver cancer (hepatocellular carcinoma). Most of cytosolic activities involve modulation of cytosolic calcium. The effect on apoptosis is controversial depending on the cell types in which the studies have been conducted. May induce apoptosis by localizing in mitochondria and causing loss of mitochondrial membrane potential. May also modulate apoptosis by binding host CFLAR, a key regulator of the death-inducing signaling complex (DISC). Promotes viral transcription by using the host E3 ubiquitin ligase DDB1 to target the SMC5-SMC6 complex to proteasomal degradation. This host complex would otherwise bind to viral episomal DNA, and prevents its transcription. Moderately stimulates transcription of many different viral and cellular transcription elements. Promoters and enhancers stimulated by HBx contain DNA binding sites for NF-kappa-B, AP-1, AP-2, c-EBP, ATF/CREB, or the calcium-activated factor NF-AT. The protein is Protein X of Hepatitis B virus genotype B1 subtype adw (isolate Japan/pJDW233/1988) (HBV-B).